A 332-amino-acid polypeptide reads, in one-letter code: Ferredoxin--NADP reductase 1 (332 aa).

Aspartate 35, lysine 43, phenylalanine 48, valine 88, phenylalanine 123, aspartate 284, and threonine 325 together coordinate FAD.

This sequence belongs to the ferredoxin--NADP reductase type 2 family. As to quaternary structure, homodimer. FAD serves as cofactor.

It carries out the reaction 2 reduced [2Fe-2S]-[ferredoxin] + NADP(+) + H(+) = 2 oxidized [2Fe-2S]-[ferredoxin] + NADPH. In Listeria innocua serovar 6a (strain ATCC BAA-680 / CLIP 11262), this protein is Ferredoxin--NADP reductase 1.